A 254-amino-acid chain; its full sequence is HTH-type transcriptional regulator GlvR (254 aa).

Residues methionine 1–glutamate 77 form the HTH rpiR-type domain. The H-T-H motif DNA-binding region spans isoleucine 37–glutamine 56. One can recognise an SIS domain in the interval methionine 106–alanine 248.

Its function is as follows. Positive regulator of the glv operon expression, which consists of GlvA, GlvR and GlvC. This is HTH-type transcriptional regulator GlvR (glvR) from Bacillus subtilis (strain 168).